The sequence spans 403 residues: Imidazolonepropionase (403 aa).

H69 and H71 together coordinate Fe(3+). Residues H69 and H71 each contribute to the Zn(2+) site. R78, Y141, and H174 together coordinate 4-imidazolone-5-propanoate. An N-formimidoyl-L-glutamate-binding site is contributed by Y141. H239 contacts Fe(3+). H239 is a binding site for Zn(2+). Q242 is a binding site for 4-imidazolone-5-propanoate. D314 is a Fe(3+) binding site. A Zn(2+)-binding site is contributed by D314. Residues N316 and G318 each contribute to the N-formimidoyl-L-glutamate site. S319 provides a ligand contact to 4-imidazolone-5-propanoate.

It belongs to the metallo-dependent hydrolases superfamily. HutI family. Requires Zn(2+) as cofactor. It depends on Fe(3+) as a cofactor.

Its subcellular location is the cytoplasm. It catalyses the reaction 4-imidazolone-5-propanoate + H2O = N-formimidoyl-L-glutamate. It functions in the pathway amino-acid degradation; L-histidine degradation into L-glutamate; N-formimidoyl-L-glutamate from L-histidine: step 3/3. Catalyzes the hydrolytic cleavage of the carbon-nitrogen bond in imidazolone-5-propanoate to yield N-formimidoyl-L-glutamate. It is the third step in the universal histidine degradation pathway. The chain is Imidazolonepropionase from Legionella pneumophila (strain Paris).